Here is a 354-residue protein sequence, read N- to C-terminus: 3-isopropylmalate dehydrogenase (354 aa).

Residue 76–87 (GPRWDSAKERPE) coordinates NAD(+). Substrate contacts are provided by Arg-94, Arg-104, Arg-130, and Asp-215. Asp-215, Asp-239, and Asp-243 together coordinate Mg(2+). 273–285 (GSAPDIAGKNKAN) lines the NAD(+) pocket.

This sequence belongs to the isocitrate and isopropylmalate dehydrogenases family. LeuB type 1 subfamily. As to quaternary structure, homodimer. Mg(2+) serves as cofactor. Requires Mn(2+) as cofactor.

It is found in the cytoplasm. It carries out the reaction (2R,3S)-3-isopropylmalate + NAD(+) = 4-methyl-2-oxopentanoate + CO2 + NADH. The protein operates within amino-acid biosynthesis; L-leucine biosynthesis; L-leucine from 3-methyl-2-oxobutanoate: step 3/4. Catalyzes the oxidation of 3-carboxy-2-hydroxy-4-methylpentanoate (3-isopropylmalate) to 3-carboxy-4-methyl-2-oxopentanoate. The product decarboxylates to 4-methyl-2 oxopentanoate. This is 3-isopropylmalate dehydrogenase from Bacillus cereus (strain ATCC 10987 / NRS 248).